Reading from the N-terminus, the 169-residue chain is Putative tRNA (cytidine(34)-2'-O)-methyltransferase (169 aa).

Residues valine 79, glycine 104, isoleucine 125, and serine 134 each contribute to the S-adenosyl-L-methionine site.

The protein belongs to the class IV-like SAM-binding methyltransferase superfamily. RNA methyltransferase TrmH family. TrmL subfamily.

Its subcellular location is the cytoplasm. The catalysed reaction is cytidine(34) in tRNA + S-adenosyl-L-methionine = 2'-O-methylcytidine(34) in tRNA + S-adenosyl-L-homocysteine + H(+). The enzyme catalyses 5-carboxymethylaminomethyluridine(34) in tRNA(Leu) + S-adenosyl-L-methionine = 5-carboxymethylaminomethyl-2'-O-methyluridine(34) in tRNA(Leu) + S-adenosyl-L-homocysteine + H(+). Its function is as follows. Could methylate the ribose at the nucleotide 34 wobble position in tRNA. The chain is Putative tRNA (cytidine(34)-2'-O)-methyltransferase from Lactococcus lactis subsp. cremoris (strain MG1363).